The sequence spans 207 residues: Ras-related protein Rab-7a (207 aa).

Residue Thr-2 is modified to N-acetylthreonine. The GTP site is built by Ser-17, Gly-18, Val-19, Gly-20, Lys-21, Thr-22, Ser-23, Ser-34, Asn-35, Tyr-37, and Thr-40. Thr-22 provides a ligand contact to Mg(2+). The Switch 1 signature appears at 28-41 (YVNKKFSNQYKATI). 2 residues coordinate Mg(2+): Thr-40 and Asp-63. Residue Gly-66 participates in GTP binding. The Switch 2 motif lies at 67-82 (QERFQSLGVAFYRGAD). The residue at position 72 (Ser-72) is a Phosphoserine. GTP contacts are provided by Asn-125, Lys-126, Asp-128, Ala-156, and Lys-157. Glycyl lysine isopeptide (Lys-Gly) (interchain with G-Cter in ubiquitin) cross-links involve residues Lys-191 and Lys-194. 2 S-geranylgeranyl cysteine lipidation sites follow: Cys-205 and Cys-207. The residue at position 207 (Cys-207) is a Cysteine methyl ester.

It belongs to the small GTPase superfamily. Rab family. As to quaternary structure, interacts with NTRK1/TRKA. Interacts with RILP. Interacts with PSMA7. Interacts with RNF115. Interacts with FYCO1. Interacts with the PIK3C3/VPS34-PIK3R4 complex. The GTP-bound form interacts with OSBPL1A. The GTP-bound form interacts with RAC1. Interacts with CLN3. Interacts with CHM, the substrate-binding subunit of the Rab geranylgeranyltransferase complex. Interacts with C9orf72. Does not interact with HPS4 and the BLOC-3 complex (heterodimer of HPS1 and HPS4). Interacts with CLN5. Interacts with PLEKHM1 (via N- and C-terminus). Interacts with PRPH; the interaction is direct. Interacts with VPS13A. The GDP-bound form interacts with RIMOC1. Interacts with the MON1A-CCZ1B complex and this interaction is enhanced in the presence of RIMOC1. Interacts with VPS39 and VPS41. Forms a ternary complex with LAMP2 and RUFY4; the interaction with LAMP2 is mediated by RUFY4 (via RUN and coiled coil domains). Mg(2+) serves as cofactor. Deubiquitination at Lys-191 and Lys-194 by USP32. In terms of processing, phosphorylated at Ser-72 by LRRK1; phosphorylation is dependent on protein kinase C (PKC) activation of LRRK1. Post-translationally, prenylated. Prenylation is required for association with cellular membranes.

It is found in the cytoplasmic vesicle. The protein localises to the phagosome membrane. Its subcellular location is the late endosome membrane. The protein resides in the lysosome membrane. It localises to the melanosome membrane. It is found in the autophagosome membrane. The protein localises to the lipid droplet. Its subcellular location is the endosome membrane. The protein resides in the mitochondrion membrane. The catalysed reaction is GTP + H2O = GDP + phosphate + H(+). Regulated by guanine nucleotide exchange factors (GEFs) which promote the exchange of bound GDP for free GTP. Regulated by GTPase activating proteins (GAPs) which increase the GTP hydrolysis activity. Inhibited by GDP dissociation inhibitors (GDIs). Functionally, the small GTPases Rab are key regulators of intracellular membrane trafficking, from the formation of transport vesicles to their fusion with membranes. Rabs cycle between an inactive GDP-bound form and an active GTP-bound form that is able to recruit to membranes different sets of downstream effectors directly responsible for vesicle formation, movement, tethering and fusion. In its active state, RAB7A binds to a variety of effector proteins playing a key role in the regulation of endo-lysosomal trafficking. Governs early-to-late endosomal maturation, microtubule minus-end as well as plus-end directed endosomal migration and positioning, and endosome-lysosome transport through different protein-protein interaction cascades. Also plays a central role in growth-factor-mediated cell signaling, nutrient-transporter-mediated nutrient uptake, neurotrophin transport in the axons of neurons and lipid metabolism. Also involved in regulation of some specialized endosomal membrane trafficking, such as maturation of melanosomes, pathogen-induced phagosomes (or vacuoles) and autophagosomes. Plays a role in the maturation and acidification of phagosomes that engulf pathogens, such as S.aureus and Mycobacteria. Plays a role in the fusion of phagosomes with lysosomes. In concert with RAC1, plays a role in regulating the formation of RBs (ruffled borders) in osteoclasts. Controls the endosomal trafficking and neurite outgrowth signaling of NTRK1/TRKA. Regulates the endocytic trafficking of the EGF-EGFR complex by regulating its lysosomal degradation. Involved in the ADRB2-stimulated lipolysis through lipophagy, a cytosolic lipase-independent autophagic pathway. Required for the exosomal release of SDCBP, CD63 and syndecan. Required for vesicular trafficking and cell surface expression of ACE2. May play a role in PRPH neuronal intermediate filament assembly. The protein is Ras-related protein Rab-7a (RAB7A) of Canis lupus familiaris (Dog).